The following is a 237-amino-acid chain: Ribonuclease PH (237 aa).

Phosphate-binding positions include R86 and 124 to 126; that span reads GTR.

Belongs to the RNase PH family. In terms of assembly, homohexameric ring arranged as a trimer of dimers.

It carries out the reaction tRNA(n+1) + phosphate = tRNA(n) + a ribonucleoside 5'-diphosphate. In terms of biological role, phosphorolytic 3'-5' exoribonuclease that plays an important role in tRNA 3'-end maturation. Removes nucleotide residues following the 3'-CCA terminus of tRNAs; can also add nucleotides to the ends of RNA molecules by using nucleoside diphosphates as substrates, but this may not be physiologically important. Probably plays a role in initiation of 16S rRNA degradation (leading to ribosome degradation) during starvation. In Methylobacterium radiotolerans (strain ATCC 27329 / DSM 1819 / JCM 2831 / NBRC 15690 / NCIMB 10815 / 0-1), this protein is Ribonuclease PH.